A 368-amino-acid chain; its full sequence is Histidinol-phosphate aminotransferase (368 aa).

Residue K223 is modified to N6-(pyridoxal phosphate)lysine.

The protein belongs to the class-II pyridoxal-phosphate-dependent aminotransferase family. Histidinol-phosphate aminotransferase subfamily. Homodimer. The cofactor is pyridoxal 5'-phosphate.

It catalyses the reaction L-histidinol phosphate + 2-oxoglutarate = 3-(imidazol-4-yl)-2-oxopropyl phosphate + L-glutamate. The protein operates within amino-acid biosynthesis; L-histidine biosynthesis; L-histidine from 5-phospho-alpha-D-ribose 1-diphosphate: step 7/9. This chain is Histidinol-phosphate aminotransferase (hisC), found in Sinorhizobium fredii (strain NBRC 101917 / NGR234).